A 480-amino-acid polypeptide reads, in one-letter code: NADH-quinone oxidoreductase subunit N 1 (480 aa).

14 consecutive transmembrane segments (helical) span residues 12 to 32, 38 to 58, 78 to 98, 106 to 126, 128 to 148, 163 to 183, 203 to 223, 241 to 261, 271 to 291, 303 to 323, 326 to 346, 372 to 392, 396 to 416, and 449 to 469; these read LSMP…IGVF, TPTV…WLVL, FMKV…VGHA, FEFP…ISAN, LISL…VAAI, FVLG…VYGF, LGLV…ISAV, TAFF…RIVI, WQQI…FAAI, SSIG…MAGV, VILY…CILA, ATVL…AGFF, FVFV…GVLA, and LVFG…GPLG.

This sequence belongs to the complex I subunit 2 family. As to quaternary structure, NDH-1 is composed of 14 different subunits. Subunits NuoA, H, J, K, L, M, N constitute the membrane sector of the complex.

The protein localises to the cell inner membrane. The catalysed reaction is a quinone + NADH + 5 H(+)(in) = a quinol + NAD(+) + 4 H(+)(out). NDH-1 shuttles electrons from NADH, via FMN and iron-sulfur (Fe-S) centers, to quinones in the respiratory chain. The immediate electron acceptor for the enzyme in this species is believed to be ubiquinone. Couples the redox reaction to proton translocation (for every two electrons transferred, four hydrogen ions are translocated across the cytoplasmic membrane), and thus conserves the redox energy in a proton gradient. The protein is NADH-quinone oxidoreductase subunit N 1 of Rhizobium meliloti (strain 1021) (Ensifer meliloti).